Here is a 1103-residue protein sequence, read N- to C-terminus: Activity-dependent neuroprotector homeobox protein (1103 aa).

Glycyl lysine isopeptide (Lys-Gly) (interchain with G-Cter in SUMO2) cross-links involve residues K39 and K72. Residues 74–97 form a C2H2-type 1; degenerate zinc finger; sequence FCCSACPFSSKFFSAYKSHFRNVH. Residue S98 is modified to Phosphoserine. The segment at 107–129 adopts a C2H2-type 2; degenerate zinc-finger fold; the sequence is LNCPYCTFNADKKTLETHIKIFH. A disordered region spans residues 133 to 154; the sequence is SSAPSSSLSTFKDKNKNDGLKP. Basic and acidic residues predominate over residues 143–154; that stretch reads FKDKNKNDGLKP. Residues K144 and K155 each participate in a glycyl lysine isopeptide (Lys-Gly) (interchain with G-Cter in SUMO2) cross-link. The C2H2-type 3; degenerate zinc-finger motif lies at 165 to 188; sequence YYCKKCTYRDPLYEIVRKHIYREH. Glycyl lysine isopeptide (Lys-Gly) (interchain with G-Cter in SUMO2) cross-links involve residues K203, K231, K266, K274, K278, K279, K311, and K335. The C2H2-type 4; degenerate zinc finger occupies 221–244; that stretch reads IHCKRCLFMPKSYEALVQHVIEDH. R348 is modified (asymmetric dimethylarginine). Residues 354 to 361 form a neuroprotective peptide (NAP) region; sequence NAPVSIPQ. The interval 360–439 is disordered; the sequence is PQQSQSVKQL…PAATGPPPSN (80 aa). Residues K367 and K408 each participate in a glycyl lysine isopeptide (Lys-Gly) (interchain with G-Cter in SUMO2) cross-link. Residues 393 to 423 show a composition bias toward polar residues; it reads SLQTANTSSLPPGQVKSPSVSQSQASRVLGQ. Phosphoserine is present on residues S409 and S413. A Glycyl lysine isopeptide (Lys-Gly) (interchain with G-Cter in SUMO2) cross-link involves residue K427. Pro residues predominate over residues 427–438; it reads KPPPAATGPPPS. The C2H2-type 5; atypical zinc-finger motif lies at 447–469; it reads KICTICNELFPENVYSVHFEKEH. 2 C2H2-type zinc fingers span residues 489–510 and 512–535; these read SKCLYCNRYLPTDTLLNHMLIH and LSCPYCRSTFNDVEKMAAHMRMVH. Glycyl lysine isopeptide (Lys-Gly) (interchain with G-Cter in SUMO2) cross-links involve residues K600 and K606. Position 608 is a phosphoserine (S608). Residues K616, K621, K632, and K658 each participate in a glycyl lysine isopeptide (Lys-Gly) (interchain with G-Cter in SUMO2) cross-link. The C2H2-type 8; atypical zinc-finger motif lies at 622-647; sequence TLCPLCFSILKGPISDALAHHLRERH. The segment at 662 to 686 adopts a C2H2-type 9; atypical zinc-finger fold; that stretch reads YKCIHCLGVYTSNMTASTITLHLVH. Residues 691 to 712 are disordered; sequence GKTQNGQDKTNAPSRLNQSPGL. Positions 692-710 are enriched in polar residues; the sequence is KTQNGQDKTNAPSRLNQSP. Residue K699 forms a Glycyl lysine isopeptide (Lys-Gly) (interchain with G-Cter in SUMO2) linkage. Residue S709 is modified to Phosphoserine. Residues K716, K728, and K731 each participate in a glycyl lysine isopeptide (Lys-Gly) (interchain with G-Cter in SUMO2) cross-link. S738 carries the post-translational modification Phosphoserine. K745 is covalently cross-linked (Glycyl lysine isopeptide (Lys-Gly) (interchain with G-Cter in SUMO2)). The homeobox DNA-binding region spans 754 to 814; the sequence is LDPKGHEDDS…SNKRKKCVRD (61 aa). S805 carries the post-translational modification Phosphoserine. Residues K807, K829, and K835 each participate in a glycyl lysine isopeptide (Lys-Gly) (interchain with G-Cter in SUMO2) cross-link. The segment at 873–1029 is disordered; it reads DSFSDSFEHL…VQDDTEQLKW (157 aa). Residues S876, S878, S886, S889, and S905 each carry the phosphoserine modification. Residues K914, K929, and K936 each participate in a glycyl lysine isopeptide (Lys-Gly) (interchain with G-Cter in SUMO2) cross-link. Over residues 922-954 the composition is skewed to basic and acidic residues; it reads ESEKLDQKEEEDGSKYETIHLTEERAKLMHDAS. Phosphoserine is present on residues S954 and S956. The span at 972–982 shows a compositional bias: polar residues; the sequence is PSESGPGSRQV. Residue K1017 forms a Glycyl lysine isopeptide (Lys-Gly) (interchain with G-Cter in SUMO2) linkage. An N6-acetyllysine; alternate mark is found at K1036 and K1043. Residues K1036 and K1043 each participate in a glycyl lysine isopeptide (Lys-Gly) (interchain with G-Cter in SUMO2); alternate cross-link. Residues 1045–1103 are disordered; the sequence is QSQWENASENAERLPNPQIEWQNSTIDSEDGEQFDSMTDGVADPMHGSLTGVKLSSQQA. Phosphoserine is present on S1072.

Interacts (via N-terminal region) with beta-catenin/CTNNB1 (via the central armadillo domains); interaction is direct and stabilizes CTNNB1 by modulating its phosphorylation by glycogen synthase kinase-3 beta GSK3B.

Its subcellular location is the nucleus. It localises to the chromosome. Its function is as follows. May be involved in transcriptional regulation. May mediate some of the neuroprotective peptide VIP-associated effects involving normal growth and cancer proliferation. Positively modulates WNT-beta-catenin/CTNN1B signaling, acting by regulating phosphorylation of, and thereby stabilizing, CTNNB1. May be required for neural induction and neuronal differentiation. May be involved in erythroid differentiation. The polypeptide is Activity-dependent neuroprotector homeobox protein (Adnp) (Rattus norvegicus (Rat)).